The sequence spans 1218 residues: NACHT, LRR and PYD domains-containing protein 1a allele 5 (1218 aa).

The segment covering 1–29 (MGESQSKQESNTRVAQHGSQQDVDPTFQT) has biased composition (polar residues). 2 disordered regions span residues 1-44 (MGES…QVEQ) and 71-91 (EMDH…DRSE). Residues 77–87 (RRHSHQSKKKL) are compositionally biased toward basic residues. One can recognise an NACHT domain in the interval 175–484 (QLVIIEGAAG…EFFAAMSYIL (310 aa)). 181-188 (GAAGIGKS) provides a ligand contact to ATP. LRR repeat units follow at residues 343–364 (KERN…LTLC), 673–693 (NLEE…RSLC), and 730–750 (RLAE…RQLC). A compositionally biased stretch (polar residues) spans 799–815 (TMPTENTDGEESLTSSK). The tract at residues 799-842 (TMPTENTDGEESLTSSKQQQQQSGDKHMEPLGTDDDFWGPSGPV) is disordered. The ZU5 stretch occupies residues 835 to 968 (FWGPSGPVST…HFAVLENPSF (134 aa)). Residues 835–1118 (FWGPSGPVST…LRPALPRMAS (284 aa)) enclose the FIIND domain. Positions 969–1118 (SPMGVLLRMI…LRPALPRMAS (150 aa)) are UPA. Residues 1122–1211 (DAPALLHFVD…HLIMDLLEKS (90 aa)) enclose the CARD domain.

It belongs to the NLRP family. As to quaternary structure, interacts (via LRR repeats) with BCL2 and BCL2L1 (via the loop between motifs BH4 and BH3). Interacts with NOD2; this interaction is enhanced in the presence of muramyl dipeptide (MDP) and increases IL1B release. Interacts with EIF2AK2/PKR; this interaction requires EIF2AK2 activity, is accompanied by EIF2AK2 autophosphorylation and promotes inflammasome assembly in response to danger-associated signals. Interacts with MEFV; this interaction targets Nlrp1a to degradation by autophagy, hence preventing excessive IL1B- and IL18-mediated inflammation. Interacts with DPP9; leading to inhibit activation of the inflammasome. DPP9 acts via formation of a ternary complex, composed of a DPP9 homodimer, one full-length NLRP1 protein, and one cleaved C-terminus of Nlrp1a (NACHT, LRR and PYD domains-containing protein 1a, C-terminus). Interacts with DPP8; leading to inhibit activation of the inflammasome, probably via formation of a ternary complex with DPP8. Interacts with the C-terminal part of Nlrp1a (NACHT, LRR and PYD domains-containing protein 1a, C-terminus) in absence of pathogens and other damage-associated signals. In terms of assembly, interacts with the N-terminal part of Nlrp1a (NACHT, LRR and PYD domains-containing protein 1a, N-terminus) in absence of pathogens and other damage-associated signals. Homomultimer; forms the Nlrp1a inflammasome polymeric complex, a filament composed of homopolymers of this form in response to pathogens and other damage-associated signals. The Nlrp1a inflammasome polymeric complex directly recruits pro-caspase-1 (proCASP1) independently of PYCARD/ASC. Interacts (via CARD domain) with CASP1 (via CARD domain); leading to CASP1 activation. In terms of processing, autocatalytically cleaved. Autocatalytic cleavage in FIIND region occurs constitutively, prior to activation signals, and is required for inflammasome activity (IL1B release), possibly by facilitating CASP1 binding. Both N- and C-terminal parts remain associated non-covalently. Post-translationally, ubiquitinated in response to pathogen-associated signals, leading to its degradation by the proteasome and subsequent release of the cleaved C-terminal part of the protein (NACHT, LRR and PYD domains-containing protein 1a, C-terminus), which polymerizes and forms the Nlrp1a inflammasome.

Its subcellular location is the cytoplasm. It is found in the cytosol. It localises to the nucleus. The protein localises to the inflammasome. Activated by pathogens and other damage-associated signals: activation promotes ubiquitination and degradation of the N-terminal part, releasing the cleaved C-terminal part of the protein (NACHT, LRR and PYD domains-containing protein 1a, C-terminus), which polymerizes and forms the Nlrp1a inflammasome. Nlrp1a inflammasome is inhibited by DPP8 and DPP9, which sequester the C-terminal fragment of Nlrp1a (NACHT, LRR and PYD domains-containing protein 1a, C-terminus) in a ternary complex, thereby preventing Nlrp1a oligomerization and activation. Nlrp1a inflammasome is strongly activated by Val-boroPro (Talabostat, PT-100), an inhibitor of dipeptidyl peptidases DPP8 and DPP9. Val-boroPro relieves inhibition of DPP8 and/or DPP9 by promoting disruption of the ternary complex, releasing its C-terminal part from autoinhibition. Not activated by cleavage by B.anthracis lethal toxin (LT) endopeptidase. Highly activated by Toxoplasma gondii. Functionally, acts as the sensor component of the Nlrp1a inflammasome, which mediates inflammasome activation in response to various pathogen-associated signals, leading to subsequent pyroptosis. Inflammasomes are supramolecular complexes that assemble in the cytosol in response to pathogens and other damage-associated signals and play critical roles in innate immunity and inflammation. Acts as a recognition receptor (PRR): recognizes specific pathogens and other damage-associated signals, such as Val-boroPro inhibitor, and mediates the formation of the inflammasome polymeric complex. In response to pathogen-associated signals, the N-terminal part of Nlrp1a is degraded by the proteasome, releasing the cleaved C-terminal part of the protein (NACHT, LRR and PYD domains-containing protein 1a, C-terminus), which polymerizes to initiate the formation of the inflammasome complex: the inflammasome directly recruits pro-caspase-1 (proCASP1) independently of PYCARD/ASC and promotes caspase-1 (CASP1) activation, which subsequently cleaves and activates inflammatory cytokines IL1B and IL18 and gasdermin-D (GSDMD), leading to pyroptosis. In the absence of GSDMD expression, the Nlrp1a inflammasome is able to recruit and activate CASP8, leading to activation of gasdermin-E (GSDME). Its function is as follows. Constitutes the precursor of the Nlrp1a inflammasome, which mediates autoproteolytic processing within the FIIND domain to generate the N-terminal and C-terminal parts, which are associated non-covalently in absence of pathogens and other damage-associated signals. In terms of biological role, regulatory part that prevents formation of the Nlrp1a inflammasome: in absence of pathogens and other damage-associated signals, interacts with the C-terminal part of Nlrp1a (NACHT, LRR and PYD domains-containing protein 1a, C-terminus), preventing activation of the Nlrp1a inflammasome. In response to pathogen-associated signals, this part is ubiquitinated by the N-end rule pathway and degraded by the proteasome, releasing the cleaved C-terminal part of the protein, which polymerizes and forms the Nlrp1a inflammasome. Constitutes the active part of the Nlrp1a inflammasome. In absence of pathogens and other damage-associated signals, interacts with the N-terminal part of Nlrp1a (NACHT, LRR and PYD domains-containing protein 1a, N-terminus), preventing activation of the Nlrp1a inflammasome. In response to pathogen-associated signals, the N-terminal part of Nlrp1a is degraded by the proteasome, releasing this form, which polymerizes to form the Nlrp1a inflammasome complex: the Nlrp1a inflammasome complex then directly recruits pro-caspase-1 (proCASP1) and promotes caspase-1 (CASP1) activation, leading to gasdermin-D (GSDMD) cleavage and subsequent pyroptosis. This chain is NACHT, LRR and PYD domains-containing protein 1a allele 5, found in Rattus norvegicus (Rat).